Here is a 407-residue protein sequence, read N- to C-terminus: 4-hydroxy-3-methylbut-2-en-1-yl diphosphate synthase (ferredoxin) (407 aa).

Positions 312, 315, 346, and 353 each coordinate [4Fe-4S] cluster.

This sequence belongs to the IspG family. [4Fe-4S] cluster is required as a cofactor.

The catalysed reaction is (2E)-4-hydroxy-3-methylbut-2-enyl diphosphate + 2 oxidized [2Fe-2S]-[ferredoxin] + H2O = 2-C-methyl-D-erythritol 2,4-cyclic diphosphate + 2 reduced [2Fe-2S]-[ferredoxin] + H(+). It participates in isoprenoid biosynthesis; isopentenyl diphosphate biosynthesis via DXP pathway; isopentenyl diphosphate from 1-deoxy-D-xylulose 5-phosphate: step 5/6. In terms of biological role, converts 2C-methyl-D-erythritol 2,4-cyclodiphosphate (ME-2,4cPP) into 1-hydroxy-2-methyl-2-(E)-butenyl 4-diphosphate. The polypeptide is 4-hydroxy-3-methylbut-2-en-1-yl diphosphate synthase (ferredoxin) (Synechococcus elongatus (strain ATCC 33912 / PCC 7942 / FACHB-805) (Anacystis nidulans R2)).